Here is a 1026-residue protein sequence, read N- to C-terminus: Probable DNA-directed RNA polymerase II subunit RPB1 homolog (1026 aa).

Cysteine 62, cysteine 65, cysteine 72, histidine 75, cysteine 102, cysteine 105, and cysteine 142 together coordinate Zn(2+). Aspartate 588, aspartate 590, and aspartate 592 together coordinate Mg(2+).

It belongs to the RNA polymerase beta' chain family.

It catalyses the reaction RNA(n) + a ribonucleoside 5'-triphosphate = RNA(n+1) + diphosphate. In terms of biological role, component of the DNA-dependent RNA polymerase that catalyzes the transcription of DNA into RNA using the four ribonucleoside triphosphates as substrates. Largest and catalytic component of RNA polymerase II which synthesizes mRNA precursors and many functional non-coding RNAs. Forms the polymerase active center together with the second largest subunit. This chain is Probable DNA-directed RNA polymerase II subunit RPB1 homolog, found in Acheta domesticus (House cricket).